The primary structure comprises 339 residues: Fructose-1,6-bisphosphatase class 1 (339 aa).

Mg(2+)-binding residues include glutamate 91, aspartate 113, leucine 115, and aspartate 116. Substrate-binding positions include 116–119 (DGSS), asparagine 210, and lysine 276. Glutamate 282 is a Mg(2+) binding site.

The protein belongs to the FBPase class 1 family. As to quaternary structure, homotetramer. It depends on Mg(2+) as a cofactor.

It localises to the cytoplasm. It catalyses the reaction beta-D-fructose 1,6-bisphosphate + H2O = beta-D-fructose 6-phosphate + phosphate. It functions in the pathway carbohydrate biosynthesis; gluconeogenesis. The chain is Fructose-1,6-bisphosphatase class 1 from Bordetella bronchiseptica (strain ATCC BAA-588 / NCTC 13252 / RB50) (Alcaligenes bronchisepticus).